Here is a 293-residue protein sequence, read N- to C-terminus: MALKAEDSFDIYSQLIQSFCRYAENTTVSESQSPAFNAQKEFQTCQDHACCTHSEAHTHILMQQWQLLEEQWEYIDHLKTDVAALKQLLHGFMNSLSGTDSGMEGTNHFLPPHQNPTLLKDEEIVASALNRPSVDINGFEENITTGAQIHAAFTKSPKKMPATSTPRKSEVLWSCSPTLATDGYFMLPDIILNPLDGKKLVSMLRSSNYEPHRFAELLFQHHVPHSLFQLWANKVNFDGSRGKLGLPRNLMIDILHQTSKRFVLGPKEKRKIKTRLNLLLRTRQDRAWWDVGL.

The region spanning 187–287 (LPDIILNPLD…LLLRTRQDRA (101 aa)) is the BEN domain.

Interacts with poc1b. In terms of tissue distribution, an mRNA and protein component of germ plasm and primordial germ cells (PGCs) throughout oogenesis and early development, being first localized to the granulo-fibrillar material (GFM) of the mitochondrial cloud in stage I and II oocytes and to the periphery of mature germinal granules both in oocytes and in embryos. Shows some somatic expression including the ectodermal cells of tailbud embryos. In adults, only expressed in ovaries.

The protein resides in the cytoplasm. It is found in the nucleus. In terms of biological role, probably plays a role in germ plasm formation, positioning and maintenance. The polypeptide is Protein Pat (Xenopus laevis (African clawed frog)).